Reading from the N-terminus, the 127-residue chain is Ribosome-binding factor A (127 aa).

It belongs to the RbfA family. In terms of assembly, monomer. Binds 30S ribosomal subunits, but not 50S ribosomal subunits or 70S ribosomes.

The protein localises to the cytoplasm. In terms of biological role, one of several proteins that assist in the late maturation steps of the functional core of the 30S ribosomal subunit. Associates with free 30S ribosomal subunits (but not with 30S subunits that are part of 70S ribosomes or polysomes). Required for efficient processing of 16S rRNA. May interact with the 5'-terminal helix region of 16S rRNA. This Chloroflexus aggregans (strain MD-66 / DSM 9485) protein is Ribosome-binding factor A.